The chain runs to 70 residues: Putative membrane protein insertion efficiency factor (70 aa).

This sequence belongs to the UPF0161 family.

It is found in the cell inner membrane. Could be involved in insertion of integral membrane proteins into the membrane. In Francisella tularensis subsp. tularensis (strain SCHU S4 / Schu 4), this protein is Putative membrane protein insertion efficiency factor.